The sequence spans 476 residues: MVAVPTSTASLQALPQYVVADIDLADFGRKELSIAETEMPGLIALRIKYGSEKPLKGARIAGSLHMTIQTGVLIETLVALGADVRWASCNIFSTQDHAAAAIAASGVPVFATKGETLDEYWAYTHRILEWGDGGTPNMILDDGGDATGLVMLGSKAESDSSVLDNPGNEEETALFASIRTKLAEDSSFYSRIKSSIQGVTEETTTGVARLYQMQKSGELPFPAINVNDSVTKSKFDNLYGCRESLVDGIKRATDVMVAGKVALVMGYGDVGKGSAQSLRGLGATVMIAEIDPICALQAAMEGYRVVRLDEVVQDVDIFVTSTGNFQVIRHEHLIRMKDEAIVCNIGHFDNEIDVASLKDYPWENIKPQVDHITLPSGNKIILLAEGRLVNLGCATGHPSFVMSNSFTNQVLAQIELFSKGDQYADQVYVLPKHLDEMVARLHLEKIGARLTELTKQQADYISVPVEGPYKPDHYRY.

Residues Thr67, Asp142, and Glu202 each coordinate substrate. 203 to 205 lines the NAD(+) pocket; sequence TTT. Substrate contacts are provided by Lys232 and Asp236. NAD(+) contacts are provided by residues Asn237, 266-271, Glu289, Asn324, 345-347, and Asn390; these read GYGDVG and IGH.

It belongs to the adenosylhomocysteinase family. The cofactor is NAD(+).

The protein localises to the cytoplasm. The catalysed reaction is S-adenosyl-L-homocysteine + H2O = L-homocysteine + adenosine. It participates in amino-acid biosynthesis; L-homocysteine biosynthesis; L-homocysteine from S-adenosyl-L-homocysteine: step 1/1. In terms of biological role, may play a key role in the regulation of the intracellular concentration of adenosylhomocysteine. The chain is Adenosylhomocysteinase from Prochlorococcus marinus (strain MIT 9313).